Consider the following 156-residue polypeptide: Small ribosomal subunit protein uS7 (156 aa).

The protein belongs to the universal ribosomal protein uS7 family. Part of the 30S ribosomal subunit. Contacts proteins S9 and S11.

Its function is as follows. One of the primary rRNA binding proteins, it binds directly to 16S rRNA where it nucleates assembly of the head domain of the 30S subunit. Is located at the subunit interface close to the decoding center, probably blocks exit of the E-site tRNA. The protein is Small ribosomal subunit protein uS7 of Hamiltonella defensa subsp. Acyrthosiphon pisum (strain 5AT).